We begin with the raw amino-acid sequence, 82 residues long: UPF0729 protein C18orf32 homolog (82 aa).

A necessary for its localzation to the endoplasmic reticulum and lipid droplets region spans residues 1–37 (MVCIPCIVIPVLLWVYKKFLEPIVYPFISPIINRIWP). The segment at 46 to 82 (TSAKKEESNGTCKASGTSITNGSVSRGEEAVPDKKTD) is disordered. A compositionally biased stretch (polar residues) spans 54 to 69 (NGTCKASGTSITNGSV). Over residues 71 to 82 (RGEEAVPDKKTD) the composition is skewed to basic and acidic residues.

It belongs to the UPF0729 family.

It is found in the endoplasmic reticulum. Its subcellular location is the lipid droplet. The polypeptide is UPF0729 protein C18orf32 homolog (Xenopus tropicalis (Western clawed frog)).